The primary structure comprises 376 residues: Glucose-1-phosphate adenylyltransferase (376 aa).

Alpha-D-glucose 1-phosphate is bound by residues tyrosine 101, glycine 166, 181–182, and serine 192; that span reads EK.

The protein belongs to the bacterial/plant glucose-1-phosphate adenylyltransferase family. In terms of assembly, homotetramer.

The enzyme catalyses alpha-D-glucose 1-phosphate + ATP + H(+) = ADP-alpha-D-glucose + diphosphate. It functions in the pathway glycan biosynthesis; glycogen biosynthesis. Involved in the biosynthesis of ADP-glucose, a building block required for the elongation reactions to produce glycogen. Catalyzes the reaction between ATP and alpha-D-glucose 1-phosphate (G1P) to produce pyrophosphate and ADP-Glc. The protein is Glucose-1-phosphate adenylyltransferase of Bacillus cereus (strain ATCC 14579 / DSM 31 / CCUG 7414 / JCM 2152 / NBRC 15305 / NCIMB 9373 / NCTC 2599 / NRRL B-3711).